The primary structure comprises 465 residues: Cysteine--tRNA ligase (465 aa).

Cysteine 30 provides a ligand contact to Zn(2+). The 'HIGH' region signature appears at 32-42 (ITVYDYCHVGH). Positions 214, 239, and 243 each coordinate Zn(2+). A 'KMSKS' region motif is present at residues 271–275 (KMSKS). ATP is bound at residue lysine 274.

The protein belongs to the class-I aminoacyl-tRNA synthetase family. Monomer. Requires Zn(2+) as cofactor.

Its subcellular location is the cytoplasm. The catalysed reaction is tRNA(Cys) + L-cysteine + ATP = L-cysteinyl-tRNA(Cys) + AMP + diphosphate. The protein is Cysteine--tRNA ligase of Burkholderia cenocepacia (strain HI2424).